The following is a 295-amino-acid chain: Hepatic leukemia factor (295 aa).

The span at 36 to 52 (PEDAFSKEKDKGKKLDD) shows a compositional bias: basic and acidic residues. Disordered regions lie at residues 36–76 (PEDA…TLPY) and 92–149 (LSEN…SPIR). Positions 225-288 (DDKYWARRRK…GKCKNILAKY (64 aa)) constitute a bZIP domain. Residues 227–247 (KYWARRRKNNMAAKRSRDARR) are basic motif. The leucine-zipper stretch occupies residues 248–255 (LKENQIAI).

This sequence belongs to the bZIP family. PAR subfamily. As to quaternary structure, binds DNA specifically as homodimer or heterodimer with other PAR factors.

It is found in the nucleus. The chain is Hepatic leukemia factor (Hlf) from Mus musculus (Mouse).